A 104-amino-acid chain; its full sequence is uncharacterized protein (104 aa).

The next 2 helical transmembrane spans lie at 47-67 (IDHRTWHIVGLCIFGFLLAML) and 72-92 (VGHVEDWFLITFAAVVLFVLA).

The protein to M.leprae ML1584.

It localises to the cell membrane. This is an uncharacterized protein from Mycobacterium tuberculosis (strain CDC 1551 / Oshkosh).